Here is a 515-residue protein sequence, read N- to C-terminus: Leucine-rich repeat transmembrane neuronal protein 2 (515 aa).

A signal peptide spans 1 to 33 (MGLHFKWPLGAPMLAAIYAMSVVLKMLPALGMA). The region spanning 34 to 61 (CPPKCRCEKLLFYCDSQGFHSVPNATDK) is the LRRNT domain. Over 34-421 (CPPKCRCEKL…EPDNAIFTQR (388 aa)) the chain is Extracellular. Residue asparagine 57 is glycosylated (N-linked (GlcNAc...) asparagine). LRR repeat units lie at residues 63-83 (SLGLSLRHNHITALERDQFAS), 86-107 (QLTWLHLDHNQISTVKEDAFQG), 110-131 (KLKELILSSNKIFYLPNTTFTQ), 134-155 (NLQNLDLSFNQLSSLHPELFYG), 158-179 (KLQTLHLRSNSLRTIPVRLFWD), 182-203 (SLEFLDLSTNRLRSLARNGFAG), 206-227 (KLRELHLEHNQLTKINFAHFLR), 230-251 (SLHTLFLQWNKISNLTCGMDWT), 254-275 (TLEKLDLTGNEIKAIDLTVFET), and 278-299 (NLKILLMDNNKLNSLDSKILNS). The N-linked (GlcNAc...) asparagine glycan is linked to asparagine 126. N-linked (GlcNAc...) asparagine glycosylation occurs at asparagine 243. The LRRCT domain occupies 311–362 (NLWECSPRVCALASWLGSFQGRWEHSILCHSPDHTQGEDILDAVHGFQLCWN). Asparagine 362 carries N-linked (GlcNAc...) asparagine glycosylation. The helical transmembrane segment at 422–442 (VITGTMALLFSFFFIIFIVFI) threads the bilayer. Over 443–515 (SRKCCPPTLR…QQLPYKECEV (73 aa)) the chain is Cytoplasmic. Positions 512-515 (ECEV) match the Involved in DLG4-binding motif.

It belongs to the LRRTM family. Interacts with DLG4. Interacts with neurexin NRXN1; interaction is mediated by heparan sulfate glycan modification on neurexin. As to expression, expressed in neuronal tissues.

It is found in the cell membrane. It localises to the postsynaptic cell membrane. Functionally, involved in the development and maintenance of excitatory synapses in the vertebrate nervous system. Regulates surface expression of AMPA receptors and instructs the development of functional glutamate release sites. Acts as a ligand for the presynaptic receptors NRXN1-A and NRXN1-B. The chain is Leucine-rich repeat transmembrane neuronal protein 2 (Lrrtm2) from Mus musculus (Mouse).